The following is a 427-amino-acid chain: Serine--tRNA ligase (427 aa).

233 to 235 contributes to the L-serine binding site; it reads TGE. Position 264 to 266 (264 to 266) interacts with ATP; it reads RSE. Glutamate 287 lines the L-serine pocket. 351–354 lines the ATP pocket; that stretch reads EVSS. Serine 387 lines the L-serine pocket.

Belongs to the class-II aminoacyl-tRNA synthetase family. Type-1 seryl-tRNA synthetase subfamily. As to quaternary structure, homodimer. The tRNA molecule binds across the dimer.

It is found in the cytoplasm. It carries out the reaction tRNA(Ser) + L-serine + ATP = L-seryl-tRNA(Ser) + AMP + diphosphate + H(+). The enzyme catalyses tRNA(Sec) + L-serine + ATP = L-seryl-tRNA(Sec) + AMP + diphosphate + H(+). It functions in the pathway aminoacyl-tRNA biosynthesis; selenocysteinyl-tRNA(Sec) biosynthesis; L-seryl-tRNA(Sec) from L-serine and tRNA(Sec): step 1/1. Catalyzes the attachment of serine to tRNA(Ser). Is also able to aminoacylate tRNA(Sec) with serine, to form the misacylated tRNA L-seryl-tRNA(Sec), which will be further converted into selenocysteinyl-tRNA(Sec). The sequence is that of Serine--tRNA ligase from Buchnera aphidicola subsp. Acyrthosiphon pisum (strain 5A).